Reading from the N-terminus, the 439-residue chain is Tol-Pal system protein TolB (439 aa).

A signal peptide spans M1 to A22.

It belongs to the TolB family. In terms of assembly, the Tol-Pal system is composed of five core proteins: the inner membrane proteins TolA, TolQ and TolR, the periplasmic protein TolB and the outer membrane protein Pal. They form a network linking the inner and outer membranes and the peptidoglycan layer.

The protein resides in the periplasm. Part of the Tol-Pal system, which plays a role in outer membrane invagination during cell division and is important for maintaining outer membrane integrity. This is Tol-Pal system protein TolB from Xanthomonas oryzae pv. oryzae (strain PXO99A).